The sequence spans 565 residues: NAD-dependent malic enzyme (565 aa).

Tyrosine 104 (proton donor) is an active-site residue. Residue arginine 157 coordinates NAD(+). Residue lysine 175 is the Proton acceptor of the active site. A divalent metal cation-binding residues include glutamate 246, aspartate 247, and aspartate 270. NAD(+) contacts are provided by aspartate 270 and asparagine 418.

The protein belongs to the malic enzymes family. Homotetramer. Mg(2+) is required as a cofactor. Mn(2+) serves as cofactor.

It carries out the reaction (S)-malate + NAD(+) = pyruvate + CO2 + NADH. The enzyme catalyses oxaloacetate + H(+) = pyruvate + CO2. In Proteus mirabilis (strain HI4320), this protein is NAD-dependent malic enzyme.